The primary structure comprises 63 residues: Large ribosomal subunit protein bL28 (63 aa).

Belongs to the bacterial ribosomal protein bL28 family.

This chain is Large ribosomal subunit protein bL28, found in Clostridium novyi (strain NT).